We begin with the raw amino-acid sequence, 670 residues long: Mannosyl-oligosaccharide alpha-1,2-mannosidase IA (670 aa).

The Cytoplasmic portion of the chain corresponds to methionine 1 to lysine 30. The chain crosses the membrane as a helical; Signal-anchor for type II membrane protein span at residues tyrosine 31–leucine 51. The Lumenal segment spans residues proline 52 to isoleucine 670. Asparagine 61 carries N-linked (GlcNAc...) asparagine glycosylation. Residues aspartate 135 to serine 177 form a disordered region. Residues cysteine 480 and cysteine 512 are joined by a disulfide bond. The active-site Proton donor is the glutamate 526. Threonine 637 is a binding site for Ca(2+).

Belongs to the glycosyl hydrolase 47 family. The cofactor is Ca(2+). In terms of processing, N-glycosylated. Contains high mannose-type oligosaccharides.

It is found in the golgi apparatus membrane. It catalyses the reaction N(4)-(alpha-D-Man-(1-&gt;2)-alpha-D-Man-(1-&gt;2)-alpha-D-Man-(1-&gt;3)-[alpha-D-Man-(1-&gt;2)-alpha-D-Man-(1-&gt;3)-[alpha-D-Man-(1-&gt;2)-alpha-D-Man-(1-&gt;6)]-alpha-D-Man-(1-&gt;6)]-beta-D-Man-(1-&gt;4)-beta-D-GlcNAc-(1-&gt;4)-beta-D-GlcNAc)-L-asparaginyl-[protein] (N-glucan mannose isomer 9A1,2,3B1,2,3) + 4 H2O = N(4)-(alpha-D-Man-(1-&gt;3)-[alpha-D-Man-(1-&gt;3)-[alpha-D-Man-(1-&gt;6)]-alpha-D-Man-(1-&gt;6)]-beta-D-Man-(1-&gt;4)-beta-D-GlcNAc-(1-&gt;4)-beta-D-GlcNAc)-L-asparaginyl-[protein] (N-glucan mannose isomer 5A1,2) + 4 beta-D-mannose. It carries out the reaction N(4)-(alpha-D-Man-(1-&gt;2)-alpha-D-Man-(1-&gt;2)-alpha-D-Man-(1-&gt;3)-[alpha-D-Man-(1-&gt;3)-[alpha-D-Man-(1-&gt;2)-alpha-D-Man-(1-&gt;6)]-alpha-D-Man-(1-&gt;6)]-beta-D-Man-(1-&gt;4)-beta-D-GlcNAc-(1-&gt;4)-beta-D-GlcNAc)-L-asparaginyl-[protein] (N-glucan mannose isomer 8A1,2,3B1,3) + 3 H2O = N(4)-(alpha-D-Man-(1-&gt;3)-[alpha-D-Man-(1-&gt;3)-[alpha-D-Man-(1-&gt;6)]-alpha-D-Man-(1-&gt;6)]-beta-D-Man-(1-&gt;4)-beta-D-GlcNAc-(1-&gt;4)-beta-D-GlcNAc)-L-asparaginyl-[protein] (N-glucan mannose isomer 5A1,2) + 3 beta-D-mannose. It participates in protein modification; protein glycosylation. Its activity is regulated as follows. Strongly inhibited by 1-deoxymannojirimycin, an inhibitor of class I alpha-mannosidases, and by EDTA. EDTA inhibition is reversed by the addition of calcium, but not of magnesium. Its function is as follows. Involved in the maturation of Asn-linked oligosaccharides. Converts Man(9)GlcNAc(2) to Man(5)GlcNAc(2) primarily through the Man(7)GlcNAc(2) isomer C processing intermediate. The protein is Mannosyl-oligosaccharide alpha-1,2-mannosidase IA of Spodoptera frugiperda (Fall armyworm).